A 40-amino-acid polypeptide reads, in one-letter code: Dolichyl-diphosphooligosaccharide--protein glycosyltransferase subunit 4 (40 aa).

Residues 1–4 (MITD) lie on the Lumenal side of the membrane. Residues 5–25 (VQLAIFSNVLGVFLFLLVVAY) traverse the membrane as a helical segment. At 26–40 (HYINANTGKSIIKSK) the chain is on the cytoplasmic side.

Belongs to the OST4 family. Component of the oligosaccharyltransferase (OST) complex.

Its subcellular location is the endoplasmic reticulum membrane. In terms of biological role, subunit of the oligosaccharyl transferase (OST) complex that catalyzes the initial transfer of a defined glycan (Glc(3)Man(9)GlcNAc(2) in eukaryotes) from the lipid carrier dolichol-pyrophosphate to an asparagine residue within an Asn-X-Ser/Thr consensus motif in nascent polypeptide chains, the first step in protein N-glycosylation. N-glycosylation occurs cotranslationally and the complex associates with the Sec61 complex at the channel-forming translocon complex that mediates protein translocation across the endoplasmic reticulum (ER). All subunits are required for a maximal enzyme activity. The sequence is that of Dolichyl-diphosphooligosaccharide--protein glycosyltransferase subunit 4 from Drosophila grimshawi (Hawaiian fruit fly).